Here is a 45-residue protein sequence, read N- to C-terminus: Osteocalcin 1 (45 aa).

A Gla domain is found at 1-41 (AAGQLSLTQLESLREVCELNLACEHMMDTEGIIAAYTAYYG). Glu-11, Glu-15, Glu-18, and Glu-24 together coordinate Ca(2+). Glu-11, Glu-15, and Glu-18 each carry 4-carboxyglutamate. Cys-17 and Cys-23 are joined by a disulfide.

Belongs to the osteocalcin/matrix Gla protein family. Post-translationally, gamma-carboxyglutamate residues are formed by vitamin K dependent carboxylation by GGCX. These residues are essential for the binding of calcium.

It is found in the secreted. In terms of biological role, the carboxylated form is one of the main organic components of the bone matrix, which constitutes 1-2% of the total bone protein. The carboxylated form binds strongly to apatite and calcium. The chain is Osteocalcin 1 from Diplodus sargus (White seabream).